A 163-amino-acid chain; its full sequence is Urease accessory protein UreE (163 aa).

The protein belongs to the UreE family.

The protein localises to the cytoplasm. Its function is as follows. Involved in urease metallocenter assembly. Binds nickel. Probably functions as a nickel donor during metallocenter assembly. The protein is Urease accessory protein UreE of Actinomyces naeslundii.